A 433-amino-acid chain; its full sequence is Sulfhydrylase FUB7 (433 aa).

Lys211 carries the N6-(pyridoxal phosphate)lysine modification.

Belongs to the trans-sulfuration enzymes family. Pyridoxal 5'-phosphate serves as cofactor.

It functions in the pathway mycotoxin biosynthesis. Its function is as follows. Sulfhydrylase; part of the gene cluster that mediates the biosynthesis of fusaric acid, a mycotoxin with low to moderate toxicity to animals and humans, but with high phytotoxic properties. L-aspartate is suggested as fusaric acid amino acid precursor that is activated and further processed to O-acetyl-L-homoserine by cluster enzymes aspartate kinase FUB3 and homoserine O-acetyltransferase FUB5, as well as enzymes of the primary metabolism. The polyketide synthase (PKS) FUB1 generates the triketide trans-2-hexenal which is presumptively released by the hydrolase FUB4 and linked to the NRPS-bound amino acid precursor by NAD(P)-dependent dehydrogenase FUB6. FUB1, FUB4, and the non-canonical NRPS Fub8 may form an enzyme complex. Further processing of the NRPS-bound intermediate might be carried out by FUB6 and the sulfhydrylase FUB7, enabling a spontaneous electrocyclization to close the carbon backbone of fusaric acid. Dihydrofusaric acid is likely to be released via reduction by the thioester reductase (TR) domain of FUB8 whereupon the final oxidation to fusaric acid may (also) be performed by the FMN-dependent dehydrogenase FUB9. This chain is Sulfhydrylase FUB7, found in Fusarium oxysporum f. sp. lycopersici (strain 4287 / CBS 123668 / FGSC 9935 / NRRL 34936) (Fusarium vascular wilt of tomato).